Reading from the N-terminus, the 687-residue chain is Homeobox-leucine zipper protein HDG12 (687 aa).

Residues 1 to 32 form a disordered region; sequence MEFLGDSQNHDSSETEKKNKKKKRFHRHTPHQ. The segment covering 8–17 has biased composition (basic and acidic residues); it reads QNHDSSETEK. The span at 18–30 shows a compositional bias: basic residues; the sequence is KNKKKKRFHRHTP. The homeobox DNA-binding region spans 21–80; the sequence is KKKRFHRHTPHQIQRLESTFNECQHPDEKQRNQLSRELGLAPRQIKFWFQNRRTQKKAQH. Residues 87 to 150 adopt a coiled-coil conformation; it reads ALKEENDKIR…LERVSSIAAK (64 aa). The region spanning 206 to 440 is the START domain; it reads SEMDKSLMTN…LQRMCERFTN (235 aa).

This sequence belongs to the HD-ZIP homeobox family. Class IV subfamily. Interacts with BBM. As to expression, expressed in apical meristems and young epidermal tissue including trichomes and stipules. Expressed in lateral root tips, the L1 layer of apical inflorescence meristems and early flower primordia, carpel and stamen filament epidermis, stigma papillae, ovule primordia, nucellus and embryo.

The protein resides in the nucleus. Functionally, probable transcription factor that acts as a negative regulator of trichome branching in association with HDG11. Seems to promote cell differentiation. May regulate cell differentiation and proliferation during root and shoot meristem development. Acts as a positive regulator of SCL18/LAS expression. Involved, together with PDF2, in the regulation of flower organs development by promoting the expression of APETALA 3 (AP3) in the epidermis and internal cell layers of developing flowers. In Arabidopsis thaliana (Mouse-ear cress), this protein is Homeobox-leucine zipper protein HDG12.